A 459-amino-acid polypeptide reads, in one-letter code: Sorting nexin-8 (459 aa).

The segment at 1–37 (MTGRAMDPLPSPAVAAAAEAEADEEADPPATGPRTSQ) is disordered. In terms of domain architecture, PX spans 68 to 176 (AKDTVQVELI…KLFLSFSGSD (109 aa)). A 1,2-diacyl-sn-glycero-3-phospho-(1D-myo-inositol-3-phosphate)-binding residues include Arg-104, Lys-130, and Arg-143. Thr-446 is subject to Phosphothreonine. Residue Ser-450 is modified to Phosphoserine.

It belongs to the sorting nexin family.

It is found in the early endosome membrane. Its function is as follows. May be involved in several stages of intracellular trafficking. May play a role in intracellular protein transport from early endosomes to the trans-Golgi network. This Mus musculus (Mouse) protein is Sorting nexin-8 (Snx8).